Consider the following 859-residue polypeptide: ATP-dependent RNA helicase DDX24 (859 aa).

N6-acetyllysine is present on lysine 17. Serine 60 is subject to Phosphoserine. The tract at residues proline 61 to alanine 170 is disordered. Lysine 71 is modified (N6-acetyllysine). Residues serine 82 and serine 94 each carry the phosphoserine modification. Positions serine 94–lysine 105 are enriched in basic residues. Polar residues predominate over residues asparagine 106 to glutamine 115. Positions leucine 125 to alanine 139 are enriched in acidic residues. The Q motif motif lies at serine 192–alanine 220. The Helicase ATP-binding domain occupies alanine 224–lysine 528. An ATP-binding site is contributed by alanine 237–threonine 244. The segment at asparagine 262 to aspartate 300 is disordered. Residues threonine 277 to alanine 293 show a composition bias toward basic and acidic residues. Phosphoserine is present on residues serine 287 and serine 295. Residue threonine 302 is modified to Phosphothreonine. Positions serine 326–lysine 376 are disordered. Lysine 370 participates in a covalent cross-link: Glycyl lysine isopeptide (Lys-Gly) (interchain with G-Cter in SUMO2). The short motif at aspartate 471–aspartate 474 is the DEAD box element. The region spanning tyrosine 578–aspartate 723 is the Helicase C-terminal domain. Residues lysine 624, lysine 808, and lysine 825 each participate in a glycyl lysine isopeptide (Lys-Gly) (interchain with G-Cter in SUMO2) cross-link. 2 stretches are compositionally biased toward polar residues: residues proline 799–glycine 814 and proline 823–leucine 833. The tract at residues proline 799 to asparagine 859 is disordered.

The protein belongs to the DEAD box helicase family. DDX24/MAK5 subfamily. Interacts with FADD. Interacts with RIPK1; this interaction disrupts RLR signaling activation of IFN-dependent transcription factor IRF7. Interacts with NIP7. Interacts with EP300; this interaction prevents TP53 acetylation mediated by EP300. In terms of assembly, (Microbial infection) Interacts with HIV-1 virus Gag and Rev proteins. Ubiquitinated by MDM2 without targeting DDX24 for proteasomal degradation. Instead, polyubiquitinated DDX24 promotes interaction with NIP7, a component of pre-rRNP processing complex, and associates with pre-rRNA molecules and pre-ribosomal particles. Ubiquitous. Most abundant in heart and brain, but with lowest levels in thymus and small intestine.

The protein resides in the cytoplasm. It localises to the nucleus. The enzyme catalyses ATP + H2O = ADP + phosphate + H(+). Its function is as follows. ATP-dependent RNA helicase that plays a role in various aspects of RNA metabolism including pre-mRNA splicing and is thereby involved in different biological processes such as cell cycle regulation or innate immunity. Plays an inhibitory role in TP53 transcriptional activity and subsequently in TP53 controlled cell growth arrest and senescence by inhibiting its EP300 mediated acetylation. Negatively regulates cytosolic RNA-mediated innate immune signaling at least in part by affecting RIPK1/IRF7 interactions. Alternatively, possesses antiviral activity by recognizing gammaherpesvirus transcripts in the context of lytic reactivation. Plays an essential role in cell cycle regulation in vascular smooth muscle cells by interacting with and regulating FANCA (Fanconi anemia complementation group A) mRNA. In terms of biological role, (Microbial infection) Plays a positive role in HIV-1 infection by promoting Rev-dependent nuclear export of viral RNAs and their packaging into virus particles. The sequence is that of ATP-dependent RNA helicase DDX24 (DDX24) from Homo sapiens (Human).